The sequence spans 160 residues: MIKKIYLAGGCFWGIEQYYNLNQKIISTNVGYLNSKIDNPTYKDVCNNITDAVEAVELTYDDQVISLNEIIDLLFKVIDPTSINKQGNDIGRQYRTGIYSRDSNELMAIQEKINELQNNYSKLIQTEVMLVDNYYLAEEYHQKYLEKNPNGYCHINLKAK.

The active site involves Cys11.

The protein belongs to the MsrA Met sulfoxide reductase family.

The catalysed reaction is L-methionyl-[protein] + [thioredoxin]-disulfide + H2O = L-methionyl-(S)-S-oxide-[protein] + [thioredoxin]-dithiol. It carries out the reaction [thioredoxin]-disulfide + L-methionine + H2O = L-methionine (S)-S-oxide + [thioredoxin]-dithiol. Functionally, has an important function as a repair enzyme for proteins that have been inactivated by oxidation. Catalyzes the reversible oxidation-reduction of methionine sulfoxide in proteins to methionine. The polypeptide is Peptide methionine sulfoxide reductase MsrA (Malacoplasma penetrans (strain HF-2) (Mycoplasma penetrans)).